The primary structure comprises 345 residues: tRNA pseudouridine synthase B (345 aa).

The active-site Nucleophile is Asp39.

The protein belongs to the pseudouridine synthase TruB family. Type 1 subfamily.

The enzyme catalyses uridine(55) in tRNA = pseudouridine(55) in tRNA. Functionally, responsible for synthesis of pseudouridine from uracil-55 in the psi GC loop of transfer RNAs. This chain is tRNA pseudouridine synthase B, found in Rickettsia rickettsii (strain Iowa).